Consider the following 89-residue polypeptide: Small ribosomal subunit protein uS17 (89 aa).

This sequence belongs to the universal ribosomal protein uS17 family. As to quaternary structure, part of the 30S ribosomal subunit.

Functionally, one of the primary rRNA binding proteins, it binds specifically to the 5'-end of 16S ribosomal RNA. This chain is Small ribosomal subunit protein uS17, found in Verminephrobacter eiseniae (strain EF01-2).